Reading from the N-terminus, the 498-residue chain is Glycerol kinase (498 aa).

Thr-14 serves as a coordination point for ADP. Thr-14, Thr-15, and Ser-16 together coordinate ATP. Thr-14 lines the sn-glycerol 3-phosphate pocket. Arg-18 serves as a coordination point for ADP. Residues Arg-84, Glu-85, Tyr-136, and Asp-245 each contribute to the sn-glycerol 3-phosphate site. Residues Arg-84, Glu-85, Tyr-136, Asp-245, and Gln-246 each contribute to the glycerol site. ADP is bound by residues Thr-267 and Gly-310. The ATP site is built by Thr-267, Gly-310, Gln-314, and Gly-410. ADP contacts are provided by Gly-410 and Asn-414.

It belongs to the FGGY kinase family.

It carries out the reaction glycerol + ATP = sn-glycerol 3-phosphate + ADP + H(+). The protein operates within polyol metabolism; glycerol degradation via glycerol kinase pathway; sn-glycerol 3-phosphate from glycerol: step 1/1. Its activity is regulated as follows. Inhibited by fructose 1,6-bisphosphate (FBP). In terms of biological role, key enzyme in the regulation of glycerol uptake and metabolism. Catalyzes the phosphorylation of glycerol to yield sn-glycerol 3-phosphate. The polypeptide is Glycerol kinase (Rhodospirillum centenum (strain ATCC 51521 / SW)).